Here is a 549-residue protein sequence, read N- to C-terminus: Teichoic acids export ATP-binding protein TagH (549 aa).

In terms of domain architecture, ABC transporter spans aspartate 22 to glutamine 243. Residue glycine 57–serine 64 coordinates ATP. Residues methionine 244–lysine 549 are unknown. In terms of domain architecture, SH3b spans alanine 346–lysine 415.

Belongs to the ABC transporter superfamily. Teichoic acids exporter (TC 3.A.1.104.1) family. The complex is composed of two ATP-binding proteins (TagH) and two transmembrane proteins (TagG).

The protein resides in the cell membrane. The enzyme catalyses ATP + H2O + teichoic acidSide 1 = ADP + phosphate + teichoic acidSide 2.. Part of the ABC transporter complex TagGH involved in teichoic acids export. Responsible for energy coupling to the transport system. This Bacillus anthracis protein is Teichoic acids export ATP-binding protein TagH.